Reading from the N-terminus, the 146-residue chain is MAKEFSRTRRIGQQLQQELAVVLQRDMKDPRIGFVTVNDVDVSRDLSYAKVFVTFFEEDKEVVQEKLNALIAAAPYIRTLVAGRMKLRVMPEIRFVYDSSLVEGMRMSNLVSQVINSDKAKQQQFGSVDDVTENDIDEADDTEGKA.

The segment at 122–146 is disordered; that stretch reads QQQFGSVDDVTENDIDEADDTEGKA. The span at 130 to 146 shows a compositional bias: acidic residues; that stretch reads DVTENDIDEADDTEGKA.

This sequence belongs to the RbfA family. As to quaternary structure, monomer. Binds 30S ribosomal subunits, but not 50S ribosomal subunits or 70S ribosomes.

The protein resides in the cytoplasm. Its function is as follows. One of several proteins that assist in the late maturation steps of the functional core of the 30S ribosomal subunit. Associates with free 30S ribosomal subunits (but not with 30S subunits that are part of 70S ribosomes or polysomes). Required for efficient processing of 16S rRNA. May interact with the 5'-terminal helix region of 16S rRNA. This is Ribosome-binding factor A from Shewanella sp. (strain MR-7).